A 1056-amino-acid polypeptide reads, in one-letter code: E3 SUMO-protein ligase ZNF451 (1056 aa).

Residues 1–39 form a disordered region; that stretch reads MGDPGPEIIESVPPAGPEASESTTDENEDDIQFVSEGPL. The tract at residues 1 to 246 is sufficient for E3 SUMO-protein ligase activity; sequence MGDPGPEIIE…AADGHSNSLL (246 aa). The segment at 1 to 344 is important for interaction with SUMO1 and SUMO2; the sequence is MGDPGPEIIE…RVRCQNAGPV (344 aa). An interaction with SUMO2 1 region spans residues 30–37; the sequence is DIQFVSEG. Positions 38–41 match the PLRP motif; the sequence is PLRP. The interaction with SUMO2 2 stretch occupies residues 42–50; it reads VLEYIDLVS. Residues K75, K77, K106, K139, and K153 each participate in a glycyl lysine isopeptide (Lys-Gly) (interchain with G-Cter in SUMO2) cross-link. S155 is subject to Phosphoserine. R158 is modified (omega-N-methylarginine). K167 is covalently cross-linked (Glycyl lysine isopeptide (Lys-Gly) (interchain with G-Cter in SUMO2)). The interval 168-521 is important for interaction with SMAD4; the sequence is PILCPIMHCN…HMSRFHGGAH (354 aa). A C2H2-type 1 zinc finger spans residues 169–195; sequence ILCPIMHCNKEFDNGHLLLGHLKRFDH. The C2H2-type 2; degenerate zinc finger occupies 212–234; that stretch reads FACAVCYEHFVTQQQYKDHLLSR. The C2H2-type 3 zinc-finger motif lies at 253-277; that stretch reads YACPQCFLLFSTKDECLKHMSTKNH. Glycyl lysine isopeptide (Lys-Gly) (interchain with G-Cter in SUMO2) cross-links involve residues K270, K275, K283, K288, K301, and K309. The C2H2-type 4; atypical zinc finger occupies 315–338; it reads VKCVACHQTLRSHMELTAHFRVRC. The segment at 362–385 adopts a C2H2-type 5 zinc-finger fold; the sequence is GYCSDCNQVFMDVASTQSHKNSGH. K420 participates in a covalent cross-link: Glycyl lysine isopeptide (Lys-Gly) (interchain with G-Cter in SUMO2). Phosphoserine is present on S429. K431 participates in a covalent cross-link: Glycyl lysine isopeptide (Lys-Gly) (interchain with G-Cter in SUMO2). C2H2-type zinc fingers lie at residues 494–517 and 527–550; these read YKCVVCGKVCEDSGVMRLHMSRFH and FWCRTCKKELVKKDAIMAHITEFH. Glycyl lysine isopeptide (Lys-Gly) (interchain with G-Cter in SUMO2) cross-links involve residues K539 and K583. Residues 604–629 form a C2H2-type 8; atypical zinc finger; that stretch reads WQCRICEDMFESQECVKQHCMSLTSH. 2 consecutive C2H2-type zinc fingers follow at residues 634 to 657 and 665 to 688; these read YSCAHCRKTFHKVETLYRHCQDEH and YFCGLCDLIFNKEEEFLSHYKEHH. Residue K645 forms a Glycyl lysine isopeptide (Lys-Gly) (interchain with G-Cter in SUMO2) linkage. K704 is covalently cross-linked (Glycyl lysine isopeptide (Lys-Gly) (interchain with G-Cter in SUMO1); alternate). K704 participates in a covalent cross-link: Glycyl lysine isopeptide (Lys-Gly) (interchain with G-Cter in SUMO2); alternate. Residues K729 and K746 each participate in a glycyl lysine isopeptide (Lys-Gly) (interchain with G-Cter in SUMO2) cross-link. 2 C2H2-type zinc fingers span residues 751-774 and 787-810; these read FRCSSCSATAQNVTDINTHVCQVH and IKCGICTKAFQNTESAQQHFHRKH. Residues K788, K815, K843, K849, K947, K988, and K989 each participate in a glycyl lysine isopeptide (Lys-Gly) (interchain with G-Cter in SUMO2) cross-link. Disordered regions lie at residues 806–830 and 839–858; these read FHRKHAALQKPTATPGGANRSSTCQ and EKNLKQPSSQKHSDVEKGAE. Over residues 849–858 the composition is skewed to basic and acidic residues; the sequence is KHSDVEKGAE. The disordered stretch occupies residues 1019–1045; it reads KECDSDDSSGMKGSPAEELRATEDVEL. Basic and acidic residues predominate over residues 1033 to 1045; the sequence is PAEELRATEDVEL. The tract at residues 1045–1056 is important for ubiquitin binding; that stretch reads LEEAIRRSLEEM.

The protein belongs to the krueppel C2H2-type zinc-finger protein family. In terms of assembly, homooligomer. Interacts (via N-terminal region) with SUMO1. Interacts (via N-terminal region) with SUMO2. Interacts simultaneously with two SUMO2 chains. Identified in a complex with SUMO2 and UBE2I/UBC9, where one ZNF451 interacts with one UBE2I/UBC9 and two SUMO2 chains, one bound to the UBE2I/UBC9 active site and the other to another region of the same UBE2I/UBC9 molecule. Interacts (via C-terminus) with ubiquitin. Interacts (via N-terminal zinc-finger domains) with SMAD4 (via MH2 domain). Interacts with SMAD2 and SMAD3. Identified in a complex that contains at least ZNF451, SMAD2, SMAD3 and SMAD4. Interacts with EP300. Inhibits interaction between EP300 and the SMAD4 complex. Interacts with SIMC1. Sumoylated. Predominantly sumoylated on the N-terminal region that is important for interaction with SUMO1 and SUMO2. Sumoylation is important for localization in nuclear granules; desumoylation leads to diffuse nucleoplasmic location. Autosumoylated (in vitro). Sumoylation enhances E3 SUMO-protein ligase activity.

It is found in the nucleus. The protein localises to the PML body. It localises to the nucleoplasm. Its pathway is protein modification; protein sumoylation. In terms of biological role, E3 SUMO-protein ligase; has a preference for SUMO2 and SUMO3 and facilitates UBE2I/UBC9-mediated sumoylation of target proteins. Plays a role in protein SUMO2 modification in response to stress caused by DNA damage and by proteasome inhibitors (in vitro). Required for MCM4 sumoylation. Has no activity with SUMO1. Preferentially transfers an additional SUMO2 chain onto the SUMO2 consensus site 'Lys-11'. Negatively regulates transcriptional activation mediated by the SMAD4 complex in response to TGF-beta signaling. Inhibits EP300-mediated acetylation of histone H3 at 'Lys-9'. Plays a role in regulating the transcription of AR targets. The sequence is that of E3 SUMO-protein ligase ZNF451 (Znf451) from Mus musculus (Mouse).